The following is a 321-amino-acid chain: Phospholipid phosphatase-related protein type 5 (321 aa).

The next 6 helical transmembrane spans lie at 6–26 (VALI…TVML), 62–82 (AVPP…VIIV), 122–142 (FLGI…AGQV), 196–213 (AALS…ITST), 225–245 (VLCL…VAEY), and 252–272 (VIAG…CVVN).

The protein belongs to the PA-phosphatase related phosphoesterase family.

It localises to the cell membrane. In terms of biological role, induces filopodia formation and promotes neurite growth in a CDC42-independent manner; impedes neurite growth inhibitory-mediated axonal retraction. This chain is Phospholipid phosphatase-related protein type 5, found in Mus musculus (Mouse).